A 217-amino-acid chain; its full sequence is METIWIYQFRLIVIGDSTVGKSCLLHRFTQGRFPGLHSPACDPTVGVDFFSRLLEIEPGKRIKLQLWDTAGQERFRSITRSYYRNSVGGFLVFDITNRRSFEHVKDWLEEAKMHVQPFQIVFLLVGHKCDLASQRQVSREEAERLSTDCGMKYIETSAKDATNVEESFTILTRDIYELIKKGEICIQDGWEGVKSGFVPNTVHSSEEAVKPRKECFC.

GTP-binding residues include S17, G20, K21, S22, C23, and T44. Position 22 (S22) interacts with Mg(2+). A switch-I region spans residues 39 to 47 (PACDPTVGV). Residues T44 and D68 each contribute to the Mg(2+) site. The GTP site is built by G71, H127, K128, D130, A158, and K159. The segment at 71–87 (GQERFRSITRSYYRNSV) is switch-II. Residues C215 and C217 are each lipidated (S-geranylgeranyl cysteine). C217 is modified (cysteine methyl ester).

Belongs to the small GTPase superfamily. Rab family. As to quaternary structure, interacts (GDP-bound) with C9orf72; C9orf72 acts as a GEF for RAB39A. Interacts (GTP-bound) with HOPS complex components VPS39 and VPS41, and STX17; interaction between HOPS components and RAB39A contributes to obtaining a functional HOPS complex that promotes membrane fusion driven by STX17-SNAP29-VAMP8. Interacts with BECN1. Probably associates with the PI3K (PI3KC3/PI3K-III/class III phosphatidylinositol 3-kinase) complex. Interacts with UACA. Interacts with isoform a of RASSF1. Does not interact with isoform c of RASSF1. It depends on Mg(2+) as a cofactor. Prenylated. Prenylation is required for association with cellular membranes.

The protein resides in the cell membrane. It localises to the cytoplasmic vesicle. Its subcellular location is the phagosome membrane. The protein localises to the late endosome membrane. It is found in the lysosome membrane. The protein resides in the autolysosome membrane. The enzyme catalyses GTP + H2O = GDP + phosphate + H(+). With respect to regulation, regulated by guanine nucleotide exchange factors (GEFs) including c9Orf72, which promote the exchange of bound GDP for free GTP. Regulated by GTPase activating proteins (GAPs) which increase the GTP hydrolysis activity. Inhibited by GDP dissociation inhibitors (GDIs). The small GTPases Rab are key regulators of intracellular membrane trafficking, from the formation of transport vesicles to their fusion with membranes. Rabs cycle between an inactive GDP-bound form and an active GTP-bound form that is able to recruit to membranes different sets of downstream effectors directly responsible for vesicle formation, movement, tethering and fusion. RAB39A regulates autophagosome-lysosome fusion via recruitment of the HOPS endosomal tethering complex onto lysosomes; this process involves lysosomal RAB39A and autophagosomal RAB2A recruitment of HOPS subcomplexes VPS41-VPS16-VPS18-VPS33A and VPS39-VPS11, respectively, which assemble into a functional complex to mediate membrane tethering and SNAREs-driven membrane fusion. Also negatively regulates lipopolysaccharide (LPS)-induced autophagosome formation in macrophages, possibly by implicating PI3K. Promotes the delivery of MHC-I molecules from the ER to phagosomes and the generation of peptide-loaded MHC-I complexes in phagosomes, thus enhancing antigen cross-presentation by dendritic cells. Plays a role in the maturation and acidification of phagosomes that engulf pathogens, such as S.aureus and M.tuberculosis. Plays a role in the fusion of phagosomes with lysosomes. May be involved in multiple neurite formation. In Mus musculus (Mouse), this protein is Ras-related protein Rab-39A.